The following is a 576-amino-acid chain: Keratin, type II cytoskeletal 5 (576 aa).

Residues 1 to 163 (MSRQSSVSFR…DPTIQRVRTE (163 aa)) are head. 4 positions are modified to phosphoserine: serine 5, serine 8, serine 16, and serine 21. The residue at position 24 (threonine 24) is a Phosphothreonine; by CDK1. Serine 26, serine 36, serine 46, serine 60, serine 67, serine 71, serine 74, and serine 78 each carry phosphoserine. The residue at position 147 (threonine 147) is a Phosphothreonine; by CDK1. Phosphothreonine; by AURKB is present on threonine 162. The coil 1A stretch occupies residues 164–199 (EREQIKTLNNKFASFIDKVRFLEQQNKVLDTKWTLL). The IF rod domain occupies 164-477 (EREQIKTLNN…KLLEGEECRL (314 aa)). The linker 1 stretch occupies residues 200 to 218 (QEQGTKTIKQNLDPLFEQY). A coil 1B region spans residues 219-311 (INNLRRQLDG…FFDAELSQMQ (93 aa)). Residues 312-334 (THVSDTSVVLSMDNNRSLDLDSI) form a linker 12 region. The interval 335 to 473 (IAEVKAQYED…ATYRKLLEGE (139 aa)) is coil 2. The tract at residues 474-576 (ECRLSGEGVG…TSSSRRSFKS (103 aa)) is tail. An Omega-N-methylarginine modification is found at arginine 527. The segment covering 540 to 557 (GFSASSGQGGGFSSGGGS) has biased composition (gly residues). Positions 540-576 (GFSASSGQGGGFSSGGGSSSSVKFVSTTSSSRRSFKS) are disordered. The span at 558-576 (SSSVKFVSTTSSSRRSFKS) shows a compositional bias: low complexity.

It belongs to the intermediate filament family. Heterodimer of a type I and a type II keratin. Heterodimer with type I keratin KRT25 leading to the formation of keratin intermediate filament (KIF) network. Forms a heterodimer (via 2B domains) with KRT14 (via 2B domains). Interacts with TCHP. Interacts with EPPK1. Interacts with AMELX. Interacts with PKP1 (via N-terminus) and PKP2. In terms of processing, phosphorylated by CDK1, AURKB and Rho-kinase, phosphorylation is regulated by the cell cycle. Thr-24 phosphorylation, mediated by CDK1, peaks during prometaphase or metaphase cells with phosphorylated filamentous structures evident throughout the cytoplasm during early mitosis. CDK1 phosphorylates Thr-24 in mitotic cells at the site of injury. Post-translationally, O-glycosylated. Expressed in the epidermis (at protein level) and testis (within pachytene spermatocytes).

The protein localises to the cytoplasm. Its function is as follows. Required for the formation of keratin intermediate filaments in the basal epidermis and maintenance of the skin barrier in response to mechanical stress. Regulates the recruitment of Langerhans cells to the epidermis, potentially by modulation of the abundance of macrophage chemotactic cytokines, macrophage inflammatory cytokines and CTNND1 localization in keratinocytes. This Rattus norvegicus (Rat) protein is Keratin, type II cytoskeletal 5.